Here is a 438-residue protein sequence, read N- to C-terminus: UDP-N-acetylmuramoylalanine--D-glutamate ligase (438 aa).

An ATP-binding site is contributed by 112-118 (GSNGKST).

Belongs to the MurCDEF family.

It is found in the cytoplasm. The enzyme catalyses UDP-N-acetyl-alpha-D-muramoyl-L-alanine + D-glutamate + ATP = UDP-N-acetyl-alpha-D-muramoyl-L-alanyl-D-glutamate + ADP + phosphate + H(+). Its pathway is cell wall biogenesis; peptidoglycan biosynthesis. Its function is as follows. Cell wall formation. Catalyzes the addition of glutamate to the nucleotide precursor UDP-N-acetylmuramoyl-L-alanine (UMA). The chain is UDP-N-acetylmuramoylalanine--D-glutamate ligase from Salmonella choleraesuis (strain SC-B67).